Here is a 1391-residue protein sequence, read N- to C-terminus: CAP-Gly domain-containing linker protein 1 (1391 aa).

Residues 1-53 are disordered; the sequence is MSMLKPSGLKAPTKILKPGSTALKTPAAAAAPVEKTIPSEKASGPPSSETQEE. Residue serine 48 is modified to Phosphoserine. Threonine 50 bears the Phosphothreonine mark. The 43-residue stretch at 78–120 folds into the CAP-Gly 1 domain; that stretch reads GETQFAPGQWAGIVLDEPIGKNDGSVAGVRYFQCEPLKGIFTR. The segment at 97–101 is important for tubulin binding; that stretch reads GKNDG. A disordered region spans residues 129–182; it reads QAEDEANGLQAAPGRTASPLSTAAATMVSSSPATPSNIPHKPSQSTAKEPSATP. Residue serine 146 is modified to Phosphoserine. Residues 146–182 are compositionally biased toward polar residues; it reads SPLSTAAATMVSSSPATPSNIPHKPSQSTAKEPSATP. Threonine 181 carries the phosphothreonine modification. A phosphoserine mark is found at serine 194, serine 196, serine 199, and serine 203. In terms of domain architecture, CAP-Gly 2 spans 231 to 273; that stretch reads GETDFAKGEWCGVELDEPLGKNDGAVAGTRYFQCQPKYGLFAP. The segment covering 302 to 331 has biased composition (low complexity); that stretch reads TPASLKRSPSASSLSSMSSVASSVSSKPSR. The disordered stretch occupies residues 302–336; that stretch reads TPASLKRSPSASSLSSMSSVASSVSSKPSRTGLLT. Serine 309 is subject to Phosphoserine. Residue serine 311 is modified to Phosphoserine; by PKA. A phosphoserine mark is found at serine 314, serine 347, and serine 1189. The stretch at 349 to 1306 forms a coiled coil; that stretch reads TTALQEALKE…VEMMSEAALN (958 aa). A disordered region spans residues 1251 to 1272; it reads KRQLSSSSGNTDAQAEEDERAQ. A Phosphoserine modification is found at serine 1317. Residues 1370 to 1387 form a CCHC-type zinc finger; the sequence is PYCEICEMFGHWATNCND.

In terms of assembly, interacts with MTOR; phosphorylates and regulates CLIP1. Interacts (via CAP-Gly domains) with tubulin. Interacts with SLAIN2. Interacts with TUBA1B, MAPRE1 and MAPRE3. Interacts (via zinc finger) with DCTN1. Binds preferentially to tyrosinated microtubules, and only marginally to detyrosinated microtubules. Post-translationally, phosphorylated. Phosphorylation induces conformational changes by increasing the affinity of the N-terminus for C-terminus, resulting in inhibition of its function thus decreasing its binding to microtubules and DCTN1. Exhibits a folded, autoinhibited conformation when phosphorylated and an open conformation when dephosphorylated with increased binding affinity to microtubules and DCTN1. Phosphorylation regulates its recruitment to tyrosinated microtubules and the recruitment of vesicular cargo to microtubules in neurons. Phosphorylation by MTOR may positively regulate CLIP1 association with microtubules. In terms of tissue distribution, expressed in the testes (at protein level).

The protein resides in the cytoplasm. Its subcellular location is the cytoskeleton. The protein localises to the cytoplasmic vesicle membrane. It localises to the cell projection. It is found in the ruffle. Its function is as follows. Binds to the plus end of microtubules and regulates the dynamics of the microtubule cytoskeleton. Promotes microtubule growth and microtubule bundling. Links cytoplasmic vesicles to microtubules and thereby plays an important role in intracellular vesicle trafficking. Plays a role macropinocytosis and endosome trafficking. The protein is CAP-Gly domain-containing linker protein 1 (Clip1) of Mus musculus (Mouse).